We begin with the raw amino-acid sequence, 269 residues long: 2-dehydro-3-deoxyphosphooctonate aldolase (269 aa).

It belongs to the KdsA family.

It is found in the cytoplasm. The catalysed reaction is D-arabinose 5-phosphate + phosphoenolpyruvate + H2O = 3-deoxy-alpha-D-manno-2-octulosonate-8-phosphate + phosphate. It participates in carbohydrate biosynthesis; 3-deoxy-D-manno-octulosonate biosynthesis; 3-deoxy-D-manno-octulosonate from D-ribulose 5-phosphate: step 2/3. The protein operates within bacterial outer membrane biogenesis; lipopolysaccharide biosynthesis. This chain is 2-dehydro-3-deoxyphosphooctonate aldolase, found in Chlamydia caviae (strain ATCC VR-813 / DSM 19441 / 03DC25 / GPIC) (Chlamydophila caviae).